The primary structure comprises 83 residues: Large ribosomal subunit protein eL14 (83 aa).

The protein belongs to the eukaryotic ribosomal protein eL14 family. Part of the 50S ribosomal subunit.

In Thermococcus kodakarensis (strain ATCC BAA-918 / JCM 12380 / KOD1) (Pyrococcus kodakaraensis (strain KOD1)), this protein is Large ribosomal subunit protein eL14.